A 506-amino-acid polypeptide reads, in one-letter code: MKEYRVYLERARSRQQDFLYPLIFREYIYGLAYSHNFNRSIFVENGGYDNKYSLLNVKRLITRMYQQNHLIISANDSNKNPFLGYNKNFYSQIISEGFAIVVEIPFFLQLSSSLEEAEIIKSYKNLRSIHSVFPFLEDKFTYLNYVSDIRIPYPIHLEILVQILRYWVKDVPFFHLLRLFLYHFCNWNCFIPTKKSISTFSKSNPRLFLFLYNFYVCEYESIFLFLRNKSYHLRLKSFSVFFERIFFYAKREHLVEVFSKDFSYTLPFFKDPNIHYVRYQGKCILASKNVPFLMNKWKYYFIHLWQCFFDVWSQPRTININQLSEHSFQLLGYFSNVRLNRSVVRSQMLQNTFLIEIVSKKLDIIVPIIPLIRSLAKAKFCNVLGHPISKPVWADSSDFDIIERFLRICRNLSHYYNGSSKKKSLYRIKYILRLSCIKTLACKHKSTVRAFLKRSGSEELLEEFFTEEEEILSLIFPRDSFTLHRFHRNRIWYLDILFNNDLVNDE.

This sequence belongs to the intron maturase 2 family. MatK subfamily.

It localises to the plastid. Its subcellular location is the chloroplast. Its function is as follows. Usually encoded in the trnK tRNA gene intron. Probably assists in splicing its own and other chloroplast group II introns. The protein is Maturase K of Trifolium gracilentum (Pinpoint clover).